Reading from the N-terminus, the 92-residue chain is Small ribosomal subunit protein uS19 (92 aa).

It belongs to the universal ribosomal protein uS19 family.

Protein S19 forms a complex with S13 that binds strongly to the 16S ribosomal RNA. In Brucella ovis (strain ATCC 25840 / 63/290 / NCTC 10512), this protein is Small ribosomal subunit protein uS19.